We begin with the raw amino-acid sequence, 685 residues long: Sulfate transporter 4.1, chloroplastic (685 aa).

The N-terminal 23 residues, 1 to 23 (MSYASLSVKDLTSLVSRSGTGSS), are a transit peptide targeting the chloroplast. Residues 15 to 26 (VSRSGTGSSSSL) are compositionally biased toward low complexity. A disordered region spans residues 15 to 53 (VSRSGTGSSSSLKPPGQTRPVKVIPLQHPDTSNEARPPS). Transmembrane regions (helical) follow at residues 97 to 117 (LDLM…MSYA), 122 to 142 (LPPI…AIFG), 147 to 167 (LAIG…GGIA), 175 to 195 (IELA…MGLL), 203 to 223 (FISH…IGLS), 255 to 275 (WPPF…KHVG), 283 to 303 (FLRA…AKVF), 332 to 352 (TLLP…VGIA), 369 to 389 (LFGL…PATG), 406 to 426 (LSGL…TPMF), 434 to 454 (LAAI…AIFL), and 473 to 493 (LFFG…AFVI). An STAS domain is found at 518–642 (QYPEAYTYNG…VRVHDAVQVC (125 aa)).

Belongs to the SLC26A/SulP transporter (TC 2.A.53) family. In terms of tissue distribution, expressed both in roots and leaves.

It localises to the plastid. Its subcellular location is the chloroplast membrane. Functionally, h(+)/sulfate cotransporter that may play a role in the regulation of sulfate assimilation. This chain is Sulfate transporter 4.1, chloroplastic (SULTR4;1), found in Arabidopsis thaliana (Mouse-ear cress).